Here is a 473-residue protein sequence, read N- to C-terminus: Aspartyl aminopeptidase 1 (473 aa).

His-93 contributes to the Zn(2+) binding site. Position 168 (His-168) interacts with substrate. Asp-262, Glu-298, Glu-299, and Asp-343 together coordinate Zn(2+). Glu-298 serves as a coordination point for substrate. Substrate is bound by residues Asp-343, His-346, Lys-371, and Tyr-378. A Zn(2+)-binding site is contributed by His-437.

It belongs to the peptidase M18 family. In terms of assembly, tetrahedron-shaped homododecamer built from six homodimers. Interacts with autophagy receptor Nbr1. Zn(2+) is required as a cofactor.

The protein localises to the cytoplasm. Its subcellular location is the vacuole lumen. The enzyme catalyses Release of an N-terminal aspartate or glutamate from a peptide, with a preference for aspartate.. Its function is as follows. Aspartyl aminopeptidase that is able to remove aspartyl residue at N-terminus of angiotensin I. Also acts as a chaperone and efficiently suppressed the thermal aggregation of citrate synthase. The protein is Aspartyl aminopeptidase 1 (ape4) of Schizosaccharomyces pombe (strain 972 / ATCC 24843) (Fission yeast).